Consider the following 93-residue polypeptide: Small ribosomal subunit protein uS19 (93 aa).

This sequence belongs to the universal ribosomal protein uS19 family.

Protein S19 forms a complex with S13 that binds strongly to the 16S ribosomal RNA. The chain is Small ribosomal subunit protein uS19 from Streptococcus gordonii (strain Challis / ATCC 35105 / BCRC 15272 / CH1 / DL1 / V288).